The chain runs to 207 residues: Cilia- and flagella-associated protein 418 (207 aa).

Residues 1 to 75 are required for interaction with FAM161A; sequence MAEDLDELLD…LINEILEEPN (75 aa). The interval 26 to 52 is disordered; sequence MVEQPKGCGGGTHSSDRNQAKAKETLR. A compositionally biased stretch (basic and acidic residues) spans 39 to 52; sequence SSDRNQAKAKETLR.

As to quaternary structure, interacts (via N-terminus) with FAM161A (via central region); the interaction is direct. Widely expressed, with highest levels in heart and brain. Also expressed in the retina (at protein level).

The protein resides in the cytoplasm. It is found in the photoreceptor inner segment. May be involved in photoreceptor outer segment disk morphogenesis. This is Cilia- and flagella-associated protein 418 from Homo sapiens (Human).